Reading from the N-terminus, the 137-residue chain is uncharacterized protein (137 aa).

It belongs to the ycf72 family.

It is found in the plastid. Its subcellular location is the chloroplast. This is an uncharacterized protein from Oryza nivara (Indian wild rice).